Reading from the N-terminus, the 550-residue chain is Glucose-6-phosphate isomerase (550 aa).

The Proton donor role is filled by E355. Residues H386 and K512 contribute to the active site.

This sequence belongs to the GPI family.

Its subcellular location is the cytoplasm. The enzyme catalyses alpha-D-glucose 6-phosphate = beta-D-fructose 6-phosphate. Its pathway is carbohydrate biosynthesis; gluconeogenesis. The protein operates within carbohydrate degradation; glycolysis; D-glyceraldehyde 3-phosphate and glycerone phosphate from D-glucose: step 2/4. Functionally, catalyzes the reversible isomerization of glucose-6-phosphate to fructose-6-phosphate. In Rhodococcus opacus (strain B4), this protein is Glucose-6-phosphate isomerase.